A 322-amino-acid polypeptide reads, in one-letter code: Gluconeogenesis factor (322 aa).

This sequence belongs to the gluconeogenesis factor family.

The protein localises to the cytoplasm. Required for morphogenesis under gluconeogenic growth conditions. This chain is Gluconeogenesis factor, found in Listeria monocytogenes serovar 1/2a (strain ATCC BAA-679 / EGD-e).